We begin with the raw amino-acid sequence, 593 residues long: AT-rich interactive domain-containing protein 3A (593 aa).

The disordered stretch occupies residues 14–222 (QQRARQELEA…PQLQPPDHGD (209 aa)). Residues 41–53 (AAPDEDREPESAR) show a composition bias toward basic and acidic residues. A compositionally biased stretch (low complexity) spans 54–87 (MQRAQMAALAAMRAAAAGLGHPASPGGSEDGPPG). S77, S81, and S88 each carry phosphoserine. Phosphothreonine is present on T98. S101 and S119 each carry phosphoserine. The span at 104–127 (RGREGPGEEHFEDMASDEDMKPKW) shows a compositional bias: basic and acidic residues. The acidic stretch occupies residues 119–156 (SDEDMKPKWEEEEMEEDLGEDEEEEEEDYEDEEEEEDE). The segment covering 128–158 (EEEEMEEDLGEDEEEEEEDYEDEEEEEDEEG) has biased composition (acidic residues). The 93-residue stretch at 238 to 330 (DPKRKEFLDD…YLYPYECEKR (93 aa)) folds into the ARID domain. S353 and S362 each carry phosphoserine. Residues K398, K399, K452, and K462 each participate in a glycyl lysine isopeptide (Lys-Gly) (interchain with G-Cter in SUMO2) cross-link. The 98-residue stretch at 444 to 541 (AALEQLREKL…GVLFAQPPAP (98 aa)) folds into the REKLES domain. Residues 445-488 (ALEQLREKLESAEPPEKKMALVADEQQRLMQRALQQNFLAMAAQ) are important for nuclear localization. A homodimerization region spans residues 490 to 513 (PMSIRINSQASESRQDSAVNLTGT). Disordered stretches follow at residues 497-516 (SQAS…TNGS) and 539-593 (PAPT…NSLP). The segment at 537 to 557 (QPPAPTPTSAPNKGGGGGGGS) is important for cytoplasmic localization. The span at 549–576 (KGGGGGGGSSSNAGGRGGNTGTSGGQAG) shows a compositional bias: gly residues. Residues 580–593 (LSTPSTSTSNNSLP) show a composition bias toward low complexity.

In terms of assembly, homodimer. Heterodimer with ARID3B. Interacts with E2F1. Interacts with GTF2I and BTK. Widely expressed, with highest expression in skeletal muscle, thalamus, and colon.

The protein localises to the nucleus. It localises to the cytoplasm. Its function is as follows. Transcription factor which may be involved in the control of cell cycle progression by the RB1/E2F1 pathway and in B-cell differentiation. In Homo sapiens (Human), this protein is AT-rich interactive domain-containing protein 3A (ARID3A).